A 224-amino-acid polypeptide reads, in one-letter code: Transmembrane emp24 domain-containing protein 7 (224 aa).

A signal peptide spans 1–34; it reads MPRPGSAQRWAAVAGRWGCRLLALLLLVPGPGGA. The Lumenal portion of the chain corresponds to 35-187; it reads SEITFELPDN…RAEDLNTRVA (153 aa). Residues 46 to 128 form the GOLD domain; the sequence is KQCFYEDIAQ…HKTVYFDFQV (83 aa). An N-linked (GlcNAc...) asparagine glycan is attached at Asn103. The chain crosses the membrane as a helical span at residues 188–208; the sequence is YWSVGEALILLVVSIGQVFLL. At 209–224 the chain is on the cytoplasmic side; sequence KSFFSDKRTTTTRVGS. The short motif at 211-212 is the COPII vesicle coat-binding element; the sequence is FF. The COPI vesicle coat-binding signature appears at 211 to 224; it reads FFSDKRTTTTRVGS.

The protein belongs to the EMP24/GP25L family. As to quaternary structure, predominantly monomeric and to lesser extent homodimeric in endoplasmic reticulum, endoplasmic reticulum-Golgi intermediate compartment and cis-Golgi network. Oligomerizes with other members of the EMP24/GP25L family such as TMED2, TMED9 and TMED10. Interacts (via C-terminus) with COPG1; the interaction involves dimeric TMED7. Post-translationally, N-linked glycosylated in complex form containing terminal sialic acid.

It localises to the endoplasmic reticulum membrane. The protein resides in the golgi apparatus. Its subcellular location is the cis-Golgi network membrane. The protein localises to the endoplasmic reticulum-Golgi intermediate compartment membrane. It is found in the cytoplasmic vesicle. It localises to the COPI-coated vesicle membrane. The protein resides in the COPII-coated vesicle membrane. Potential role in vesicular protein trafficking, mainly in the early secretory pathway. Appears to play a role in the biosynthesis of secreted cargo including processing and post-translational modifications. This chain is Transmembrane emp24 domain-containing protein 7 (TMED7), found in Homo sapiens (Human).